Consider the following 215-residue polypeptide: Protein Thf1 (215 aa).

Residues 188–209 are a coiled coil; it reads IELVQETIAAERRKKERRQAEQ.

This sequence belongs to the THF1 family.

Its function is as follows. May be involved in photosynthetic membrane biogenesis. This chain is Protein Thf1, found in Synechococcus sp. (strain CC9902).